The following is a 485-amino-acid chain: Cobyric acid synthase (485 aa).

The region spanning 249–437 (HLKIRVPVWQ…WHGLFSQPSA (189 aa)) is the GATase cobBQ-type domain. Cys330 (nucleophile) is an active-site residue. Residue His429 is part of the active site.

Belongs to the CobB/CobQ family. CobQ subfamily.

It functions in the pathway cofactor biosynthesis; adenosylcobalamin biosynthesis. Functionally, catalyzes amidations at positions B, D, E, and G on adenosylcobyrinic A,C-diamide. NH(2) groups are provided by glutamine, and one molecule of ATP is hydrogenolyzed for each amidation. The polypeptide is Cobyric acid synthase (Saccharophagus degradans (strain 2-40 / ATCC 43961 / DSM 17024)).